Here is a 310-residue protein sequence, read N- to C-terminus: Protoheme IX farnesyltransferase (310 aa).

8 helical membrane-spanning segments follow: residues 31–51, 53–73, 102–122, 124–144, 149–169, 170–190, 242–262, and 289–309; these read VIELLLVTAIPAMLLADRGSV, PLLILNTLIGGMLAAAGANTL, NALIFGLVLSVGSFFWLWGTS, LLSGLLAVATIAFYVFVYTLL, TSQNVVWGGAAGCMPVMIGWS, AVTGTIQWPALVMFAIIFFWT, LATGWLYASVAVLAGTWFLVM, and LAVVFAALAVDSVLALPTLLG.

This sequence belongs to the UbiA prenyltransferase family. Protoheme IX farnesyltransferase subfamily.

It is found in the cell membrane. The catalysed reaction is heme b + (2E,6E)-farnesyl diphosphate + H2O = Fe(II)-heme o + diphosphate. It participates in porphyrin-containing compound metabolism; heme O biosynthesis; heme O from protoheme: step 1/1. In terms of biological role, converts heme B (protoheme IX) to heme O by substitution of the vinyl group on carbon 2 of heme B porphyrin ring with a hydroxyethyl farnesyl side group. This is Protoheme IX farnesyltransferase from Mycobacterium sp. (strain JLS).